Here is a 67-residue protein sequence, read N- to C-terminus: ATP synthase F(0) complex subunit 8 (67 aa).

Residues 8-24 traverse the membrane as a helical segment; that stretch reads TWFTVILSMIISLFMLL. The residue at position 54 (Lys54) is an N6-acetyllysine; alternate. N6-succinyllysine; alternate is present on Lys54. Lys57 is modified (N6-acetyllysine).

This sequence belongs to the ATPase protein 8 family. Component of the ATP synthase complex composed at least of ATP5F1A/subunit alpha, ATP5F1B/subunit beta, ATP5MC1/subunit c (homooctomer), MT-ATP6/subunit a, MT-ATP8/subunit 8, ATP5ME/subunit e, ATP5MF/subunit f, ATP5MG/subunit g, ATP5MK/subunit k, ATP5MJ/subunit j, ATP5F1C/subunit gamma, ATP5F1D/subunit delta, ATP5F1E/subunit epsilon, ATP5PF/subunit F6, ATP5PB/subunit b, ATP5PD/subunit d, ATP5PO/subunit OSCP. ATP synthase complex consists of a soluble F(1) head domain (subunits alpha(3) and beta(3)) - the catalytic core - and a membrane F(0) domain - the membrane proton channel (subunits c, a, 8, e, f, g, k and j). These two domains are linked by a central stalk (subunits gamma, delta, and epsilon) rotating inside the F1 region and a stationary peripheral stalk (subunits F6, b, d, and OSCP). Interacts with PRICKLE3.

It localises to the mitochondrion membrane. Subunit 8, of the mitochondrial membrane ATP synthase complex (F(1)F(0) ATP synthase or Complex V) that produces ATP from ADP in the presence of a proton gradient across the membrane which is generated by electron transport complexes of the respiratory chain. ATP synthase complex consist of a soluble F(1) head domain - the catalytic core - and a membrane F(1) domain - the membrane proton channel. These two domains are linked by a central stalk rotating inside the F(1) region and a stationary peripheral stalk. During catalysis, ATP synthesis in the catalytic domain of F(1) is coupled via a rotary mechanism of the central stalk subunits to proton translocation. In vivo, can only synthesize ATP although its ATP hydrolase activity can be activated artificially in vitro. Part of the complex F(0) domain. The protein is ATP synthase F(0) complex subunit 8 of Cavia porcellus (Guinea pig).